The sequence spans 346 residues: GTPase Obg (346 aa).

Residues 1-159 (MRFVDRCRLK…RELRLELKVL (159 aa)) form the Obg domain. The tract at residues 122-147 (KGGRGNLHFKSPHDRAPRRAEPGEPG) is disordered. The segment covering 132–147 (SPHDRAPRRAEPGEPG) has biased composition (basic and acidic residues). Residues 160 to 336 (ADVGLLGFPN…LVRELAALAR (177 aa)) enclose the OBG-type G domain. GTP-binding positions include 166-173 (GFPNAGKS), 191-195 (FTTLT), 218-221 (DIPG), 288-291 (TKAD), and 317-319 (SAA). Mg(2+)-binding residues include serine 173 and threonine 193.

This sequence belongs to the TRAFAC class OBG-HflX-like GTPase superfamily. OBG GTPase family. As to quaternary structure, monomer. The cofactor is Mg(2+).

It is found in the cytoplasm. Its function is as follows. An essential GTPase which binds GTP, GDP and possibly (p)ppGpp with moderate affinity, with high nucleotide exchange rates and a fairly low GTP hydrolysis rate. Plays a role in control of the cell cycle, stress response, ribosome biogenesis and in those bacteria that undergo differentiation, in morphogenesis control. The polypeptide is GTPase Obg (Sorangium cellulosum (strain So ce56) (Polyangium cellulosum (strain So ce56))).